The chain runs to 246 residues: MLDQVCQLARNAGDAIMQVYDGTKPMDVVSKADNSPVTAADIAAHTVIMDGLRTLTPDVPVLSEEDPPGWEVRQHWQRYWLVDPLDGTKEFIKRNGEFTVNIALIDHGKPILGVVYAPVMNVMYSAAEGKAWKEECGVRKQIQVRDARPPLVVISRSHADAELKEYLQQLGEHQTTSIGSSLKFCLVAEGQAQLYPRFGPTNIWDTAAGHAVAAAAGAHVHDWQGKPLDYTPRESFLNPGFRVSIY.

Residues glutamate 64, aspartate 83, leucine 85, aspartate 86, and aspartate 205 each contribute to the Mg(2+) site. Glutamate 64 contributes to the substrate binding site. Substrate-binding positions include 85–88 and aspartate 205; that span reads LDGT.

The protein belongs to the inositol monophosphatase superfamily. CysQ family. Mg(2+) serves as cofactor.

It is found in the cell inner membrane. The catalysed reaction is adenosine 3',5'-bisphosphate + H2O = AMP + phosphate. Its activity is regulated as follows. Inhibited by lithium and calcium. Functionally, converts adenosine-3',5'-bisphosphate (PAP) to AMP. May also convert adenosine 3'-phosphate 5'-phosphosulfate (PAPS) to adenosine 5'-phosphosulfate (APS). Has 10000-fold lower activity towards inositol 1,4-bisphosphate (Ins(1,4)P2). The polypeptide is 3'(2'),5'-bisphosphate nucleotidase CysQ (Escherichia coli (strain K12)).